We begin with the raw amino-acid sequence, 316 residues long: Methionyl-tRNA formyltransferase (316 aa).

114-117 (SLLP) serves as a coordination point for (6S)-5,6,7,8-tetrahydrofolate.

The protein belongs to the Fmt family.

It carries out the reaction L-methionyl-tRNA(fMet) + (6R)-10-formyltetrahydrofolate = N-formyl-L-methionyl-tRNA(fMet) + (6S)-5,6,7,8-tetrahydrofolate + H(+). Functionally, attaches a formyl group to the free amino group of methionyl-tRNA(fMet). The formyl group appears to play a dual role in the initiator identity of N-formylmethionyl-tRNA by promoting its recognition by IF2 and preventing the misappropriation of this tRNA by the elongation apparatus. The polypeptide is Methionyl-tRNA formyltransferase (Aromatoleum aromaticum (strain DSM 19018 / LMG 30748 / EbN1) (Azoarcus sp. (strain EbN1))).